Consider the following 106-residue polypeptide: PAT complex subunit Asterix (106 aa).

Over residues 1 to 10 (MSANSMSDPR) the composition is skewed to polar residues. A disordered region spans residues 1–29 (MSANSMSDPRSPNKVLRYKPPPSECNPAL). Ser2 bears the N-acetylserine mark. Residues 2 to 32 (SANSMSDPRSPNKVLRYKPPPSECNPALDDP) are Cytoplasmic-facing. A helical transmembrane segment spans residues 33–51 (TPDYMNLLGMIFSMCGLML). Lys52 is a topological domain (lumenal). The helical transmembrane segment at 53 to 70 (LKWCAWVAVYCSFISFAN) threads the bilayer. Residues 71–74 (SRSS) are Cytoplasmic-facing. The helical transmembrane segment at 75–95 (EDTKQMMSSFMLSISAVVMSY) threads the bilayer. The Lumenal segment spans residues 96 to 106 (LQNPQPMTPPW).

Belongs to the Asterix family. As to quaternary structure, component of the PAT complex, composed of WDR83OS/Asterix and CCDC47. The PAT complex is part of the multi-pass translocon (MPT) complex, composed of three subcomplexes, the GEL complex (composed of RAB5IF/OPTI and TMCO1), the BOS complex (composed of NCLN/Nicalin, NOMO1 and TMEM147) and the PAT complex (composed of WDR83OS/Asterix and CCDC47). The MPT complex associates with the SEC61 complex.

The protein resides in the endoplasmic reticulum membrane. Functionally, component of the multi-pass translocon (MPT) complex that mediates insertion of multi-pass membrane proteins into the lipid bilayer of membranes. The MPT complex takes over after the SEC61 complex: following membrane insertion of the first few transmembrane segments of proteins by the SEC61 complex, the MPT complex occludes the lateral gate of the SEC61 complex to promote insertion of subsequent transmembrane regions. Within the MPT complex, the PAT subcomplex sequesters any highly polar regions in the transmembrane domains away from the non-polar membrane environment until they can be buried in the interior of the fully assembled protein. Within the PAT subcomplex, WDR83OS/Asterix binds to and redirects the substrate to a location behind the SEC61 complex. The chain is PAT complex subunit Asterix (WDR83OS) from Sus scrofa (Pig).